A 311-amino-acid chain; its full sequence is Ribosomal RNA small subunit methyltransferase H (311 aa).

S-adenosyl-L-methionine contacts are provided by residues 32 to 34, D52, F78, D99, and Q106; that span reads GGH.

The protein belongs to the methyltransferase superfamily. RsmH family.

It is found in the cytoplasm. The catalysed reaction is cytidine(1402) in 16S rRNA + S-adenosyl-L-methionine = N(4)-methylcytidine(1402) in 16S rRNA + S-adenosyl-L-homocysteine + H(+). Functionally, specifically methylates the N4 position of cytidine in position 1402 (C1402) of 16S rRNA. This chain is Ribosomal RNA small subunit methyltransferase H, found in Halothermothrix orenii (strain H 168 / OCM 544 / DSM 9562).